The following is a 558-amino-acid chain: Membrane protein insertase YidC (558 aa).

Transmembrane regions (helical) follow at residues 6–26, 326–348, 355–377, 424–444, 469–489, and 512–532; these read VIAAISLSAAVIILYSLFFQP, LAIDWGFMYFITKPLFFVLDYFF, GLAIIAVTICIRLAFFPLANFSF, LPILVQIPVFFALYKVLFVTI, VFGLIPWDPPSFLLIGAWPII, and IFMFFPVFLTVILAPFPAGLV.

The protein belongs to the OXA1/ALB3/YidC family. Type 1 subfamily. Interacts with the Sec translocase complex via SecD. Specifically interacts with transmembrane segments of nascent integral membrane proteins during membrane integration.

The protein resides in the cell inner membrane. Required for the insertion and/or proper folding and/or complex formation of integral membrane proteins into the membrane. Involved in integration of membrane proteins that insert both dependently and independently of the Sec translocase complex, as well as at least some lipoproteins. Aids folding of multispanning membrane proteins. The protein is Membrane protein insertase YidC of Pelagibacter ubique (strain HTCC1062).